Reading from the N-terminus, the 284-residue chain is Tropomyosin alpha-1 chain (284 aa).

Residues 1–40 (MDAIKKKMQMLKLDKENALDRAEQAEADKKGAEDKSKQLE) form a disordered region. A coiled-coil region spans residues 1–284 (MDAIKKKMQM…DHALNDMTSI (284 aa)). Residues 12–40 (KLDKENALDRAEQAEADKKGAEDKSKQLE) are compositionally biased toward basic and acidic residues.

The protein belongs to the tropomyosin family. Homodimer. Heterodimer of an alpha (TPM1, TPM3 or TPM4) and a beta (TPM2) chain.

The protein resides in the cytoplasm. Its subcellular location is the cytoskeleton. Functionally, binds to actin filaments in muscle and non-muscle cells. Plays a central role, in association with the troponin complex, in the calcium dependent regulation of vertebrate striated muscle contraction. Smooth muscle contraction is regulated by interaction with caldesmon. In non-muscle cells is implicated in stabilizing cytoskeleton actin filaments. In Rana temporaria (European common frog), this protein is Tropomyosin alpha-1 chain (tpm1).